We begin with the raw amino-acid sequence, 406 residues long: Immediate early response gene 5-like protein (406 aa).

Disordered stretches follow at residues 166–195 and 216–235; these read QPPH…APAA and AAPS…PSSS. Residues 182 to 193 are compositionally biased toward pro residues; the sequence is QPGPAPLPPPAP.

It belongs to the IER family.

The polypeptide is Immediate early response gene 5-like protein (Ier5l) (Mus musculus (Mouse)).